The following is a 300-amino-acid chain: N-acetylmuramic acid 6-phosphate etherase (300 aa).

The SIS domain maps to 55–217; it reads IAERLRAGGR…STGAMIRLGK (163 aa). Glu83 functions as the Proton donor in the catalytic mechanism. Glu114 is a catalytic residue.

This sequence belongs to the GCKR-like family. MurNAc-6-P etherase subfamily. As to quaternary structure, homodimer.

The catalysed reaction is N-acetyl-D-muramate 6-phosphate + H2O = N-acetyl-D-glucosamine 6-phosphate + (R)-lactate. Its pathway is amino-sugar metabolism; N-acetylmuramate degradation. Functionally, specifically catalyzes the cleavage of the D-lactyl ether substituent of MurNAc 6-phosphate, producing GlcNAc 6-phosphate and D-lactate. This is N-acetylmuramic acid 6-phosphate etherase from Symbiobacterium thermophilum (strain DSM 24528 / JCM 14929 / IAM 14863 / T).